A 257-amino-acid polypeptide reads, in one-letter code: Imidazole glycerol phosphate synthase subunit HisF (257 aa).

Catalysis depends on residues Asp12 and Asp131.

It belongs to the HisA/HisF family. Heterodimer of HisH and HisF.

It localises to the cytoplasm. It carries out the reaction 5-[(5-phospho-1-deoxy-D-ribulos-1-ylimino)methylamino]-1-(5-phospho-beta-D-ribosyl)imidazole-4-carboxamide + L-glutamine = D-erythro-1-(imidazol-4-yl)glycerol 3-phosphate + 5-amino-1-(5-phospho-beta-D-ribosyl)imidazole-4-carboxamide + L-glutamate + H(+). It participates in amino-acid biosynthesis; L-histidine biosynthesis; L-histidine from 5-phospho-alpha-D-ribose 1-diphosphate: step 5/9. IGPS catalyzes the conversion of PRFAR and glutamine to IGP, AICAR and glutamate. The HisF subunit catalyzes the cyclization activity that produces IGP and AICAR from PRFAR using the ammonia provided by the HisH subunit. The chain is Imidazole glycerol phosphate synthase subunit HisF from Burkholderia pseudomallei (strain 1106a).